A 182-amino-acid polypeptide reads, in one-letter code: NADH-quinone oxidoreductase subunit C 2 (182 aa).

Positions 153 to 182 (YKDKLNPFGAEGPPPTQPDLATNDIPQGGR) are disordered.

This sequence belongs to the complex I 30 kDa subunit family. As to quaternary structure, NDH-1 is composed of 14 different subunits. Subunits NuoB, C, D, E, F, and G constitute the peripheral sector of the complex.

Its subcellular location is the cell inner membrane. It carries out the reaction a quinone + NADH + 5 H(+)(in) = a quinol + NAD(+) + 4 H(+)(out). Its function is as follows. NDH-1 shuttles electrons from NADH, via FMN and iron-sulfur (Fe-S) centers, to quinones in the respiratory chain. The immediate electron acceptor for the enzyme in this species is believed to be ubiquinone. Couples the redox reaction to proton translocation (for every two electrons transferred, four hydrogen ions are translocated across the cytoplasmic membrane), and thus conserves the redox energy in a proton gradient. The chain is NADH-quinone oxidoreductase subunit C 2 from Rhizobium meliloti (strain 1021) (Ensifer meliloti).